The following is a 124-amino-acid chain: MPTIQQLIRTERQTLSRKTKSPALRSCPERRGVCTRVYTSTPKKPNSALRKVARVRLTSGFEVTAYIPGIGHNLQEHSVVLIRGGRVKDLPGVRYHIIRGTLDTAGVKDRRQSRSKYGAKAPKE.

The tract at residues 9 to 28 (RTERQTLSRKTKSPALRSCP) is disordered. 3-methylthioaspartic acid is present on Asp89. The disordered stretch occupies residues 104–124 (TAGVKDRRQSRSKYGAKAPKE).

The protein belongs to the universal ribosomal protein uS12 family. In terms of assembly, part of the 30S ribosomal subunit. Contacts proteins S8 and S17. May interact with IF1 in the 30S initiation complex.

Its function is as follows. With S4 and S5 plays an important role in translational accuracy. Functionally, interacts with and stabilizes bases of the 16S rRNA that are involved in tRNA selection in the A site and with the mRNA backbone. Located at the interface of the 30S and 50S subunits, it traverses the body of the 30S subunit contacting proteins on the other side and probably holding the rRNA structure together. The combined cluster of proteins S8, S12 and S17 appears to hold together the shoulder and platform of the 30S subunit. The polypeptide is Small ribosomal subunit protein uS12 (Synechococcus sp. (strain RCC307)).